We begin with the raw amino-acid sequence, 412 residues long: P-selectin glycoprotein ligand 1 (412 aa).

Positions 1-17 are cleaved as a signal peptide; it reads MPLQLLLLLILLGPGNS. The propeptide occupies 18-41; sequence LQLWDTWADEAEKALGPLLARDRR. At 18–320 the chain is on the extracellular side; it reads LQLWDTWADE…APDHISVKQC (303 aa). At glutamine 42 the chain carries Pyrrolidone carboxylic acid. A sulfotyrosine mark is found at tyrosine 46, tyrosine 48, and tyrosine 51. Residues 56 to 95 are disordered; it reads ETEPPEMLRNSTDTTPLTGPGTPESTTVEPAARRSTGLDA. The O-linked (GalNAc...) threonine glycan is linked to threonine 57. Asparagine 65 is a glycosylation site (N-linked (GlcNAc...) asparagine). The segment covering 66 to 82 has biased composition (low complexity); the sequence is STDTTPLTGPGTPESTT. N-linked (GlcNAc...) asparagine glycosylation is present at asparagine 111. 12 tandem repeats follow at residues 122–131, 132–141, 142–151, 162–171, 182–191, 192–201, 202–211, 212–221, 222–231, 232–241, 242–251, and 252–261. Residues 122-261 are 12 X 10 AA tandem repeats; that stretch reads QTTQPAATEA…QTTPLAAMEA (140 aa). Disordered stretches follow at residues 125-146 and 166-252; these read QPAA…TTPL and LAAT…TEAQ. A glycan (N-linked (GlcNAc...) asparagine) is linked at asparagine 302. The chain crosses the membrane as a helical span at residues 321-341; that stretch reads LLAILILALVATIFFVCTVVL. Residues 342–412 lie on the Cytoplasmic side of the membrane; the sequence is AVRLSRKGHM…DDLTLHSFLP (71 aa). The disordered stretch occupies residues 374 to 412; it reads EGPSATANGGLSKAKSPGLTPEPREDREGDDLTLHSFLP. Residues 395-406 are compositionally biased toward basic and acidic residues; sequence EPREDREGDDLT. Position 406 is a phosphothreonine (threonine 406). Residue serine 409 is modified to Phosphoserine.

Homodimer; disulfide-linked. Interaction with P-, E- and L-selectins, through their lectin/EGF domains, is required for promoting recruitment and rolling of leukocytes. These interactions require sialyl Lewis X glycan modification but there is a differing dependence for tyrosine sulfations. Sulfation on Tyr-51 of PSGL1 is most important for high affinity L-selectin/SELL binding while P-selectin/SELP requires sulfation on Tyr-48. E-selectin/SELE binds with much lower affinity and requires the sLe(x) epitope, but apparently not tyrosine sulfation. Dimerization appears not to be required for P-selectin/SELP binding. Interacts with SNX20. Interacts with MSN and SYK; mediates the activation of SYK by SELPLG. Interacts with HAVCR1. As to quaternary structure, (Microbial infection) Interacts with enterovirus 71 capsid proteins. In terms of assembly, (Microbial infection) Interacts with Staphylococcus aureus proteins SSL5 and SSL11; these interactions prevent SELPLG-mediated neutrophil rolling. Displays complex, core-2, sialylated and fucosylated O-linked oligosaccharides, at least some of which appear to contain poly-N-acetyllactosamine with varying degrees of substitution. Mainly disialylated or neutral forms of the core-2 tetrasaccharide, Galbeta1--&gt;4GlcNAcbeta1--&gt;6(Galbeta1--&gt;3)GalNAcOH. The GlcN:GalN ratio is approximately 2:1 and the Man:Fuc ratio 3:5. Contains about 14% fucose with alpha-1,3 linkage present in two forms: One species is a disialylated, monofucosylated glycan, and the other, a monosialylated, trifucosylated glycan with a polylactosamine backbone. The fucosylated forms carry the Lewis antigen and are important for interaction with selectins and for functioning in leukocyte rolling. The modification containing the sialyl Lewis X glycan is on Thr-57. No sulfated O-glycans. Some N-glycosylation. In terms of processing, sulfation, in conjunction with the SLe(x)-containing glycan, is necessary for P- and L-selectin binding. High affinity P-selectin binding has a preferred requirement for the isomer sulfated on both Tyr-48 and Tyr-51, whereas L-selectin binding requires predominantly sulfation on Tyr-51 with sulfation on Tyr-48 playing only a minor role. These sulfations play an important role in L- and P-selectin-mediated neutrophil recruitment, and leukocyte rolling. In terms of tissue distribution, expressed on neutrophils, monocytes and most lymphocytes.

The protein localises to the membrane. Functionally, a SLe(x)-type proteoglycan, which through high affinity, calcium-dependent interactions with E-, P- and L-selectins, mediates rapid rolling of leukocytes over vascular surfaces during the initial steps in inflammation. Critical for the initial leukocyte capture. In terms of biological role, (Microbial infection) Acts as a receptor for enterovirus 71. In Homo sapiens (Human), this protein is P-selectin glycoprotein ligand 1 (SELPLG).